Consider the following 217-residue polypeptide: UPF0502 protein VFMJ11_A0613 (217 aa).

This sequence belongs to the UPF0502 family.

This Aliivibrio fischeri (strain MJ11) (Vibrio fischeri) protein is UPF0502 protein VFMJ11_A0613.